A 356-amino-acid polypeptide reads, in one-letter code: DNA-directed RNA polymerase subunit alpha (356 aa).

An alpha N-terminal domain (alpha-NTD) region spans residues 1–230 (MNLHRISSEP…DLLKPLLKVE (230 aa)). An alpha C-terminal domain (alpha-CTD) region spans residues 267–356 (IDQPLLPADS…IRKSYGHILG (90 aa)).

This sequence belongs to the RNA polymerase alpha chain family. In terms of assembly, in plastids the minimal PEP RNA polymerase catalytic core is composed of four subunits: alpha, beta, beta', and beta''. When a (nuclear-encoded) sigma factor is associated with the core the holoenzyme is formed, which can initiate transcription.

Its subcellular location is the plastid. The protein resides in the chloroplast. It carries out the reaction RNA(n) + a ribonucleoside 5'-triphosphate = RNA(n+1) + diphosphate. Its function is as follows. DNA-dependent RNA polymerase catalyzes the transcription of DNA into RNA using the four ribonucleoside triphosphates as substrates. This chain is DNA-directed RNA polymerase subunit alpha, found in Zygnema circumcarinatum (Green alga).